The following is a 207-amino-acid chain: Ras-related protein Rab-5B (207 aa).

Glycine 2 carries N-myristoyl glycine lipidation. GTP is bound by residues 41-49 (GDSGVGKSS), 60-66 (SEKHQVT), 90-94 (DTGGQ), 148-151 (NKKD), and 176-178 (SAK). Residues 63–71 (HQVTIGAAF) carry the Effector region motif.

Belongs to the small GTPase superfamily. Rab family. Interacts with CK1. May interact with ARF1. Myristoylation is required for cell membrane and food vacuole membrane localization. In terms of processing, may be palmitoylated on Cys-3. Post-translationally, lacks the C-terminal cysteine motifs subject to isoprenylation present in mammalian RAB5B homolog.

It localises to the cell membrane. The protein resides in the vacuole membrane. The protein localises to the vesicle. The catalysed reaction is GTP + H2O = GDP + phosphate + H(+). With respect to regulation, alternates between an inactive GDP-bound form and an active GTP-bound form. Activated by guanine nucleotide-exchange factors (GEFs) and inactivated by GTPase-activating proteins (GAPs). In terms of biological role, small GTPase which regulates vesicle trafficking between organelles. May be involved in the trafficking of the N-myristoylated AK2 from the endoplasmic reticulum to the parasitophorous vacuole membrane. In Plasmodium falciparum (isolate 3D7), this protein is Ras-related protein Rab-5B.